Consider the following 233-residue polypeptide: Short chain dehydrogenase trt9 (233 aa).

Asp33, Arg95, Tyr127, Lys131, and Val160 together coordinate NADP(+). The active-site Proton donor is the Tyr127. Lys131 (lowers pKa of active site Tyr) is an active-site residue.

This sequence belongs to the short-chain dehydrogenases/reductases (SDR) family.

The protein operates within secondary metabolite biosynthesis; terpenoid biosynthesis. Short chain dehydrogenase; part of the gene cluster that mediates the biosynthesis of terretonin, a fungal meroterpenoid that acts as a mycotoxin. The first step of the pathway is the synthesis of 3,5-dimethylorsellinic acid (DMOA) by the polyketide synthase trt4. DMOA is then prenylated into farnesyl-DMOA by the polyprenyl transferase trt2. Methylation by the methyltransferase trt5 then leads to farnesyl-DMOA methyl ester which is further subject to epoxidation by the FAD-dependent monooxygenase trt8 to yield epoxyfarnesyl-DMOA methyl ester. Cyclization of epoxyfarnesyl-DMOA methyl ester by the terpene cyclase trt1 leads to a tetracycle intermediate which is in turn converted to preterretonin. Dehydrogenase trt9 comes next to transform preterretonin to preterrenoid. The FAD-dependent monooxygenase trt3 is then required for the C-hydroxylation at C16 of preterrenoid to yield terrenoid. The cytochrome P450 trt6 catalyzes three successive oxidations to transform terrenoid into an unstable intermediate, which then undergoes the D-ring expansion and unusual rearrangement of the methoxy group to afford the core skeleton of terretonin. Trt14 catalyzes the D-ring expansion of terretonin involving intramolecular methoxy rearrangement as well as the hydrolysis of the expanded D-ring and the methyl ester moiety. Finally, the nonheme iron-dependent dioxygenase trt7 accomplishes the last two oxidation reactions steps to complete the biosynthesis of terretonin. Terretonin C is produced via spontaneous decarboxylation of the terretonin precursor. Another shunt product of the terretonin biosynthesis is dihydrofarnesyl-DMOA, derived from epoxyfarnesyl-DMOA through hydrolysis of the epoxide. The sequence is that of Short chain dehydrogenase trt9 from Aspergillus terreus (strain NIH 2624 / FGSC A1156).